Consider the following 173-residue polypeptide: Adenine phosphoribosyltransferase (173 aa).

This sequence belongs to the purine/pyrimidine phosphoribosyltransferase family. As to quaternary structure, homodimer.

The protein localises to the cytoplasm. The catalysed reaction is AMP + diphosphate = 5-phospho-alpha-D-ribose 1-diphosphate + adenine. It participates in purine metabolism; AMP biosynthesis via salvage pathway; AMP from adenine: step 1/1. Catalyzes a salvage reaction resulting in the formation of AMP, that is energically less costly than de novo synthesis. The sequence is that of Adenine phosphoribosyltransferase from Thermotoga maritima (strain ATCC 43589 / DSM 3109 / JCM 10099 / NBRC 100826 / MSB8).